The following is a 177-amino-acid chain: MFFAEIKQEEVIVGGFRIGQGFDVHQLVEGRKLVIGGVTIPYEKGLLGHSDADVLLHAICDAVLGAAALGDIGRHFSDTDPRYRNIDSRVLLQNVGNLLAERGYRVVNVDATIIAQAPRMASHIPAMVANIAQDLRMQPGDVNVKAKTAERLGPVGRGEGIEAEAVCLITHMNQTTD.

The a divalent metal cation site is built by aspartate 23 and histidine 25. 4-CDP-2-C-methyl-D-erythritol 2-phosphate contacts are provided by residues 23 to 25 and 49 to 50; these read DVH and HS. Histidine 57 is an a divalent metal cation binding site. Residues 71-73, 76-80, 115-121, and arginine 157 contribute to the 4-CDP-2-C-methyl-D-erythritol 2-phosphate site; these read DIG, FSDTD, and AQAPRMA.

It belongs to the IspF family. In terms of assembly, homotrimer. Requires a divalent metal cation as cofactor.

The enzyme catalyses 4-CDP-2-C-methyl-D-erythritol 2-phosphate = 2-C-methyl-D-erythritol 2,4-cyclic diphosphate + CMP. It functions in the pathway isoprenoid biosynthesis; isopentenyl diphosphate biosynthesis via DXP pathway; isopentenyl diphosphate from 1-deoxy-D-xylulose 5-phosphate: step 4/6. Involved in the biosynthesis of isopentenyl diphosphate (IPP) and dimethylallyl diphosphate (DMAPP), two major building blocks of isoprenoid compounds. Catalyzes the conversion of 4-diphosphocytidyl-2-C-methyl-D-erythritol 2-phosphate (CDP-ME2P) to 2-C-methyl-D-erythritol 2,4-cyclodiphosphate (ME-CPP) with a corresponding release of cytidine 5-monophosphate (CMP). This chain is 2-C-methyl-D-erythritol 2,4-cyclodiphosphate synthase, found in Nitrosospira multiformis (strain ATCC 25196 / NCIMB 11849 / C 71).